A 253-amino-acid chain; its full sequence is Triosephosphate isomerase (253 aa).

13 to 15 (NWK) provides a ligand contact to substrate. Catalysis depends on histidine 100, which acts as the Electrophile. The Proton acceptor role is filled by glutamate 169. Substrate is bound by residues glycine 175, serine 208, and 229–230 (GG).

The protein belongs to the triosephosphate isomerase family. As to quaternary structure, homodimer.

The protein localises to the cytoplasm. It catalyses the reaction D-glyceraldehyde 3-phosphate = dihydroxyacetone phosphate. Its pathway is carbohydrate biosynthesis; gluconeogenesis. The protein operates within carbohydrate degradation; glycolysis; D-glyceraldehyde 3-phosphate from glycerone phosphate: step 1/1. Its function is as follows. Involved in the gluconeogenesis. Catalyzes stereospecifically the conversion of dihydroxyacetone phosphate (DHAP) to D-glyceraldehyde-3-phosphate (G3P). This chain is Triosephosphate isomerase, found in Synechococcus sp. (strain RCC307).